A 240-amino-acid chain; its full sequence is Serine protease SplB (240 aa).

Positions 1–36 (MNKNVVIKSLATLTILTSVAGIGTTLVEEVQQTAKA) are cleaved as a signal peptide. Active-site charge relay system residues include H75, D113, and S193.

This sequence belongs to the peptidase S1B family.

The protein localises to the secreted. Functionally, serine protease that cleaves specifically after the sequence Trp-Glu-Leu-Gln. This Staphylococcus aureus (strain bovine RF122 / ET3-1) protein is Serine protease SplB (splB).